Reading from the N-terminus, the 545-residue chain is Ribulokinase (545 aa).

Belongs to the ribulokinase family.

The catalysed reaction is D-ribulose + ATP = D-ribulose 5-phosphate + ADP + H(+). It carries out the reaction L-ribulose + ATP = L-ribulose 5-phosphate + ADP + H(+). The protein operates within carbohydrate degradation; L-arabinose degradation via L-ribulose; D-xylulose 5-phosphate from L-arabinose (bacterial route): step 2/3. The protein is Ribulokinase of Staphylococcus aureus (strain USA300).